A 194-amino-acid chain; its full sequence is Imidazoleglycerol-phosphate dehydratase (194 aa).

It belongs to the imidazoleglycerol-phosphate dehydratase family.

The protein localises to the cytoplasm. It catalyses the reaction D-erythro-1-(imidazol-4-yl)glycerol 3-phosphate = 3-(imidazol-4-yl)-2-oxopropyl phosphate + H2O. It functions in the pathway amino-acid biosynthesis; L-histidine biosynthesis; L-histidine from 5-phospho-alpha-D-ribose 1-diphosphate: step 6/9. The polypeptide is Imidazoleglycerol-phosphate dehydratase (Rubrobacter xylanophilus (strain DSM 9941 / JCM 11954 / NBRC 16129 / PRD-1)).